The chain runs to 1048 residues: PH and SEC7 domain-containing protein 3 (1048 aa).

Over residues 36 to 45 the composition is skewed to basic and acidic residues; the sequence is SEGKAPDTSD. The interval 36-57 is disordered; that stretch reads SEGKAPDTSDHGGSTLLPPNVT. Ser76 is modified (phosphoserine). Disordered stretches follow at residues 104 to 126, 310 to 342, 364 to 383, and 395 to 434; these read LDSV…LKEQ, GGDK…KVPR, SWKA…SPVR, and QENK…PGYT. A compositionally biased stretch (basic and acidic residues) spans 311 to 321; it reads GDKRETQHPID. Residues 397 to 423 show a composition bias toward basic and acidic residues; sequence NKQHLEKTPKPERDRERISEQEEHVKG. Residues 534–734 enclose the SEC7 domain; the sequence is TKGTPEIAFW…KALYNSIKNE (201 aa). Positions 741 to 758 are enriched in basic and acidic residues; sequence DDEEKKKSPSESTEEKAN. Residues 741-769 form a disordered region; it reads DDEEKKKSPSESTEEKANGTHPKTISRIG. Position 770 is a phosphoserine (Ser770). Positions 785–898 constitute a PH domain; it reads AVYKSGFLAR…WINKINCVAA (114 aa). The stretch at 922 to 952 forms a coiled coil; sequence ATTTKLSQEEQLKSHESKLKQITTELAEHRS. The interval 999-1048 is disordered; that stretch reads DESEAAGLKKSHSSPSLNPDTSPITAKVKRNVSERKDHRPETPSIKQKVT. Residues Ser1009, Ser1011, Ser1012, Ser1014, and Ser1020 each carry the phosphoserine modification. Over residues 1011 to 1022 the composition is skewed to polar residues; that stretch reads SSPSLNPDTSPI. Positions 1029–1039 are enriched in basic and acidic residues; sequence NVSERKDHRPE.

In terms of tissue distribution, isoform 2 is expressed in epididymis (at protein level).

It localises to the cell membrane. It is found in the cell projection. The protein resides in the ruffle membrane. The protein localises to the postsynaptic density. In terms of biological role, guanine nucleotide exchange factor for ARF6. This chain is PH and SEC7 domain-containing protein 3 (PSD3), found in Homo sapiens (Human).